Reading from the N-terminus, the 288-residue chain is Elongation factor Ts (288 aa).

The interval 82–85 is involved in Mg(2+) ion dislocation from EF-Tu; sequence TDFV.

This sequence belongs to the EF-Ts family.

It localises to the cytoplasm. In terms of biological role, associates with the EF-Tu.GDP complex and induces the exchange of GDP to GTP. It remains bound to the aminoacyl-tRNA.EF-Tu.GTP complex up to the GTP hydrolysis stage on the ribosome. This chain is Elongation factor Ts, found in Chlorobium limicola (strain DSM 245 / NBRC 103803 / 6330).